A 277-amino-acid chain; its full sequence is Large ribosomal subunit protein uL2 (277 aa).

Disordered regions lie at residues 37–60 and 223–264; these read KNST…GHKH and VVMN…NKRT. The span at 39–49 shows a compositional bias: polar residues; that stretch reads STAGRNNNGHI. The span at 50–60 shows a compositional bias: basic residues; sequence TTRHKGGGHKH. Positions 229–244 are enriched in basic and acidic residues; that stretch reads DHPHGGGEGRTGEARE.

Belongs to the universal ribosomal protein uL2 family. In terms of assembly, part of the 50S ribosomal subunit. Forms a bridge to the 30S subunit in the 70S ribosome.

In terms of biological role, one of the primary rRNA binding proteins. Required for association of the 30S and 50S subunits to form the 70S ribosome, for tRNA binding and peptide bond formation. It has been suggested to have peptidyltransferase activity; this is somewhat controversial. Makes several contacts with the 16S rRNA in the 70S ribosome. The chain is Large ribosomal subunit protein uL2 from Neisseria gonorrhoeae (strain ATCC 700825 / FA 1090).